The sequence spans 431 residues: Histidinol dehydrogenase 1 (431 aa).

3 residues coordinate NAD(+): Y127, Q188, and N211. Substrate is bound by residues S234, Q256, and H259. The Zn(2+) site is built by Q256 and H259. Catalysis depends on proton acceptor residues E324 and H325. Substrate is bound by residues H325, D358, E412, and H417. D358 lines the Zn(2+) pocket. H417 contacts Zn(2+).

The protein belongs to the histidinol dehydrogenase family. The cofactor is Zn(2+).

The catalysed reaction is L-histidinol + 2 NAD(+) + H2O = L-histidine + 2 NADH + 3 H(+). Its pathway is amino-acid biosynthesis; L-histidine biosynthesis; L-histidine from 5-phospho-alpha-D-ribose 1-diphosphate: step 9/9. Catalyzes the sequential NAD-dependent oxidations of L-histidinol to L-histidinaldehyde and then to L-histidine. The chain is Histidinol dehydrogenase 1 (hisD1) from Nostoc sp. (strain PCC 7120 / SAG 25.82 / UTEX 2576).